The sequence spans 231 residues: 7-cyano-7-deazaguanine synthase (231 aa).

An ATP-binding site is contributed by 17 to 27; sequence FSGGMDSFTLL. 4 residues coordinate Zn(2+): Cys-193, Cys-201, Cys-204, and Cys-207.

Belongs to the QueC family. Requires Zn(2+) as cofactor.

The enzyme catalyses 7-carboxy-7-deazaguanine + NH4(+) + ATP = 7-cyano-7-deazaguanine + ADP + phosphate + H2O + H(+). Its pathway is purine metabolism; 7-cyano-7-deazaguanine biosynthesis. Its function is as follows. Catalyzes the ATP-dependent conversion of 7-carboxy-7-deazaguanine (CDG) to 7-cyano-7-deazaguanine (preQ(0)). This Hahella chejuensis (strain KCTC 2396) protein is 7-cyano-7-deazaguanine synthase.